We begin with the raw amino-acid sequence, 299 residues long: ClpXP adapter protein SpxH (299 aa).

This sequence belongs to the SpxH family. In terms of assembly, interacts with Spx. Interacts with SpxO/YuzO.

It localises to the cytoplasm. Its activity is regulated as follows. Irreversible aggregation upon several stress conditions prevents interaction with Spx and therefore leads to Spx stabilization. Inhibited by interaction with SpxO/YuzO. Its function is as follows. Adapter protein required for efficient degradation of Spx by ClpXP under non-stress conditions. Interaction with Spx stabilizes Spx and exposes the C-terminus of Spx for recognition and proteolysis by ClpXP. Is specific for Spx and does not enhance proteolysis by ClpCP protease. Probably binds 2 zinc ions. The chain is ClpXP adapter protein SpxH from Bacillus subtilis (strain 168).